A 122-amino-acid chain; its full sequence is Large ribosomal subunit protein uL14 (122 aa).

This sequence belongs to the universal ribosomal protein uL14 family. Part of the 50S ribosomal subunit. Forms a cluster with proteins L3 and L19. In the 70S ribosome, L14 and L19 interact and together make contacts with the 16S rRNA in bridges B5 and B8.

In terms of biological role, binds to 23S rRNA. Forms part of two intersubunit bridges in the 70S ribosome. The polypeptide is Large ribosomal subunit protein uL14 (Marinobacter nauticus (strain ATCC 700491 / DSM 11845 / VT8) (Marinobacter aquaeolei)).